We begin with the raw amino-acid sequence, 212 residues long: Probable GTP-binding protein EngB (212 aa).

Residues 38-210 (SLPEIAFVGK…KASLAKCIKP (173 aa)) enclose the EngB-type G domain. GTP is bound by residues 46–53 (GKSNVGKS), 73–77 (GRTRQ), 91–94 (DLPG), 158–161 (TKSD), and 189–191 (VSN). Residues S53 and T75 each contribute to the Mg(2+) site.

This sequence belongs to the TRAFAC class TrmE-Era-EngA-EngB-Septin-like GTPase superfamily. EngB GTPase family. It depends on Mg(2+) as a cofactor.

Necessary for normal cell division and for the maintenance of normal septation. The sequence is that of Probable GTP-binding protein EngB from Rickettsia conorii (strain ATCC VR-613 / Malish 7).